The chain runs to 654 residues: Probable Xaa-Pro aminopeptidase P (654 aa).

4 residues coordinate Mn(2+): D451, D462, E560, and E574.

Belongs to the peptidase M24B family. It depends on Mn(2+) as a cofactor.

It carries out the reaction Release of any N-terminal amino acid, including proline, that is linked to proline, even from a dipeptide or tripeptide.. Its function is as follows. Catalyzes the removal of a penultimate prolyl residue from the N-termini of peptides. This Botryotinia fuckeliana (strain B05.10) (Noble rot fungus) protein is Probable Xaa-Pro aminopeptidase P (ampp).